An 842-amino-acid chain; its full sequence is Protein P (842 aa).

Positions 1–177 are terminal protein domain (TP); sequence MPLSYQHFRR…FCGSPYSWEQ (177 aa). Residues 178–345 form a spacer region; that stretch reads ELHHGAFLDG…YCLTHLVNLL (168 aa). A disordered region spans residues 186-273; sequence DGPSRMGEES…AKNIASRSAS (88 aa). Residues 223-239 are compositionally biased toward polar residues; the sequence is GPQSQQRPLDGSQQGRS. Positions 346–689 are polymerase/reverse transcriptase domain (RT); that stretch reads EDWGPCTEHG…YLNLYPVARQ (344 aa). One can recognise a Reverse transcriptase domain in the interval 356–599; sequence KHHIRIPRTP…YSLNFMGYVI (244 aa). Mg(2+)-binding residues include Asp428, Asp550, and Asp551.

Belongs to the hepadnaviridae P protein family.

The enzyme catalyses DNA(n) + a 2'-deoxyribonucleoside 5'-triphosphate = DNA(n+1) + diphosphate. It carries out the reaction Endonucleolytic cleavage to 5'-phosphomonoester.. Activated by host HSP70 and HSP40 in vitro to be able to bind the epsilon loop of the pgRNA. Because deletion of the RNase H region renders the protein partly chaperone-independent, the chaperones may be needed indirectly to relieve occlusion of the RNA-binding site by this domain. Inhibited by several reverse-transcriptase inhibitors: Lamivudine, Adefovir and Entecavir. Functionally, multifunctional enzyme that converts the viral RNA genome into dsDNA in viral cytoplasmic capsids. This enzyme displays a DNA polymerase activity that can copy either DNA or RNA templates, and a ribonuclease H (RNase H) activity that cleaves the RNA strand of RNA-DNA heteroduplexes in a partially processive 3'- to 5'-endonucleasic mode. Neo-synthesized pregenomic RNA (pgRNA) are encapsidated together with the P protein, and reverse-transcribed inside the nucleocapsid. Initiation of reverse-transcription occurs first by binding the epsilon loop on the pgRNA genome, and is initiated by protein priming, thereby the 5'-end of (-)DNA is covalently linked to P protein. Partial (+)DNA is synthesized from the (-)DNA template and generates the relaxed circular DNA (RC-DNA) genome. After budding and infection, the RC-DNA migrates in the nucleus, and is converted into a plasmid-like covalently closed circular DNA (cccDNA). The activity of P protein does not seem to be necessary for cccDNA generation, and is presumably released from (+)DNA by host nuclear DNA repair machinery. The chain is Protein P from Homo sapiens (Human).